The following is a 233-amino-acid chain: Biosynthetic peptidoglycan transglycosylase (233 aa).

The helical transmembrane segment at 8 to 28 threads the bilayer; the sequence is LIALPVGIFIFFNAYVYGNII.

This sequence belongs to the glycosyltransferase 51 family.

The protein localises to the cell inner membrane. It catalyses the reaction [GlcNAc-(1-&gt;4)-Mur2Ac(oyl-L-Ala-gamma-D-Glu-L-Lys-D-Ala-D-Ala)](n)-di-trans,octa-cis-undecaprenyl diphosphate + beta-D-GlcNAc-(1-&gt;4)-Mur2Ac(oyl-L-Ala-gamma-D-Glu-L-Lys-D-Ala-D-Ala)-di-trans,octa-cis-undecaprenyl diphosphate = [GlcNAc-(1-&gt;4)-Mur2Ac(oyl-L-Ala-gamma-D-Glu-L-Lys-D-Ala-D-Ala)](n+1)-di-trans,octa-cis-undecaprenyl diphosphate + di-trans,octa-cis-undecaprenyl diphosphate + H(+). It participates in cell wall biogenesis; peptidoglycan biosynthesis. Functionally, peptidoglycan polymerase that catalyzes glycan chain elongation from lipid-linked precursors. This Neisseria gonorrhoeae (strain NCCP11945) protein is Biosynthetic peptidoglycan transglycosylase.